The sequence spans 544 residues: Chaperonin GroEL (544 aa).

ATP-binding positions include 30-33, Lys51, 87-91, Gly415, 478-480, and Asp494; these read TLGP, DGTTT, and NAA.

This sequence belongs to the chaperonin (HSP60) family. As to quaternary structure, forms a cylinder of 14 subunits composed of two heptameric rings stacked back-to-back. Interacts with the co-chaperonin GroES.

The protein localises to the cytoplasm. The catalysed reaction is ATP + H2O + a folded polypeptide = ADP + phosphate + an unfolded polypeptide.. Functionally, together with its co-chaperonin GroES, plays an essential role in assisting protein folding. The GroEL-GroES system forms a nano-cage that allows encapsulation of the non-native substrate proteins and provides a physical environment optimized to promote and accelerate protein folding. The protein is Chaperonin GroEL of Geobacter sulfurreducens (strain ATCC 51573 / DSM 12127 / PCA).